The chain runs to 408 residues: Acetate kinase (408 aa).

N10 provides a ligand contact to Mg(2+). Residue K17 coordinates ATP. Substrate is bound at residue R96. The active-site Proton donor/acceptor is D153. Residues H213–G217 and D288–R290 contribute to the ATP site. A Mg(2+)-binding site is contributed by E393.

Belongs to the acetokinase family. Homodimer. Requires Mg(2+) as cofactor. It depends on Mn(2+) as a cofactor.

It is found in the cytoplasm. The enzyme catalyses acetate + ATP = acetyl phosphate + ADP. It functions in the pathway metabolic intermediate biosynthesis; acetyl-CoA biosynthesis; acetyl-CoA from acetate: step 1/2. Functionally, catalyzes the formation of acetyl phosphate from acetate and ATP. Can also catalyze the reverse reaction. This is Acetate kinase from Borrelia recurrentis (strain A1).